The chain runs to 418 residues: Serine hydroxymethyltransferase (418 aa).

Residues L120 and 124–126 (GHL) each bind (6S)-5,6,7,8-tetrahydrofolate. N6-(pyridoxal phosphate)lysine is present on K229. (6S)-5,6,7,8-tetrahydrofolate is bound at residue 353–355 (SPF).

This sequence belongs to the SHMT family. As to quaternary structure, homodimer. Pyridoxal 5'-phosphate is required as a cofactor.

It localises to the cytoplasm. The enzyme catalyses (6R)-5,10-methylene-5,6,7,8-tetrahydrofolate + glycine + H2O = (6S)-5,6,7,8-tetrahydrofolate + L-serine. It participates in one-carbon metabolism; tetrahydrofolate interconversion. The protein operates within amino-acid biosynthesis; glycine biosynthesis; glycine from L-serine: step 1/1. Functionally, catalyzes the reversible interconversion of serine and glycine with tetrahydrofolate (THF) serving as the one-carbon carrier. This reaction serves as the major source of one-carbon groups required for the biosynthesis of purines, thymidylate, methionine, and other important biomolecules. Also exhibits THF-independent aldolase activity toward beta-hydroxyamino acids, producing glycine and aldehydes, via a retro-aldol mechanism. This Psychrobacter arcticus (strain DSM 17307 / VKM B-2377 / 273-4) protein is Serine hydroxymethyltransferase.